Consider the following 174-residue polypeptide: Regulator of G-protein signaling 8 (174 aa).

In terms of domain architecture, RGS spans 46–162; it reads SFDILLSNKY…IRSKIYQDLL (117 aa).

The protein localises to the cell membrane. It is found in the membrane. It localises to the perikaryon. Its subcellular location is the cell projection. The protein resides in the dendrite. The protein localises to the nucleus. Functionally, regulates G protein-coupled receptor signaling cascades, including signaling via muscarinic acetylcholine receptors and dopamine receptors. Inhibits signal transduction by increasing the GTPase activity of G protein alpha subunits, thereby driving them into their inactive GDP-bound form. Modulates the activity of potassium channels that are activated in response to G protein-coupled receptor signaling. In Danio rerio (Zebrafish), this protein is Regulator of G-protein signaling 8 (rgs8).